The chain runs to 406 residues: NIPA-like protein 3 (406 aa).

The next 4 helical transmembrane spans lie at 33–53, 76–96, 101–121, and 135–155; these read NLIGALLAIFGHLVVSIALNL, WWLGLFLMLLGELGVFASYAF, LIVPLSAVSVIASAIIGIIFI, and ILSFVGCGLAVVGTYLLVTFA. Asparagine 166 carries an N-linked (GlcNAc...) asparagine glycan. Transmembrane regions (helical) follow at residues 171–191, 202–222, 240–260, 271–291, and 300–320; these read LVSWPFLLYMLVEIILFCLLL, IVVILLLVALLGSMTVVTVKA, PIFYVMFVCMVATAVYQAAFL, LIASVGYILSTTIAITAGAIF, and VLHICMFALGCLIAFLGVFLI. Phosphoserine is present on serine 372.

It belongs to the NIPA family.

It localises to the membrane. The sequence is that of NIPA-like protein 3 (NIPAL3) from Pongo abelii (Sumatran orangutan).